The sequence spans 402 residues: Advanced glycosylation end product-specific receptor (402 aa).

An N-terminal signal peptide occupies residues 1–22 (MPAGTAARAWVLVLALWGAVAG). Positions 23-109 (GQNITARIGE…ATNRRGKEVK (87 aa)) constitute an Ig-like V-type domain. Residues 23 to 340 (GQNITARIGE…VGESGLGTLA (318 aa)) lie on the Extracellular side of the membrane. N-linked (GlcNAc...) asparagine glycosylation is found at Asn25 and Asn80. Disulfide bonds link Cys38/Cys98 and Cys143/Cys206. Ig-like C2-type domains follow at residues 123–219 (PEIV…RPLN) and 233–315 (PEGI…PPVS). The segment at 295 to 332 (GTYSCVATHPSHGPQESPPVSIRVTETGDEGPAEGSVG) is disordered. Residues 341–361 (LALGILGGLGVVALLVGAILW) form a helical membrane-spanning segment. Over 362-402 (RKRQPRREERKAPESQEDEEERAELNQSEEAEMPENGAGGP) the chain is Cytoplasmic. A disordered region spans residues 365-402 (QPRREERKAPESQEDEEERAELNQSEEAEMPENGAGGP). 2 positions are modified to phosphoserine; by ATM: Ser376 and Ser389. Positions 376 to 394 (SQEDEEERAELNQSEEAEM) are enriched in acidic residues.

In terms of assembly, constitutive homodimer; disulfide-linked. Forms homooligomers. Interacts with S100A1 and APP. Interacts with S100B, S100A12 and S100A14. Interacts with TIRAP. Interacts with HMGB1. Interacts with LGP2; this interaction plays an important role in AGER-mediated pro-inflammatory responses and cytokine release. Interacts with double-strand break repair protein MRE11 which is a core component of the MRN complex; the interaction enhances MRE11 endonuclease activity and promotes DNA repair. Interacts with the MCM2-7 complex via interaction with complex member MCM2; the interaction is increased following DNA replication stress and stabilizes the MCM2-7 complex at replication forks. In terms of processing, phosphorylated on its cytoplasmic domain by PKCzeta/PRKCZ upon ligand binding. Phosphorylated by ATM following DNA damage. Post-translationally, targeted by the ubiquitin E3 ligase subunit FBXO10 to mediate its ubiquitination and degradation. In terms of tissue distribution, isoform 1: Expressed at higher levels in the coronary arterioles in type 2 diabetic mice (at protein level). Endothelial cells. Expressed in lung, kidney, brain and heart. Most prevalent isoform with the highest level in heart. Isoform 2: Expressed in brain, lung, kidney and small intestine with the highest level in lung. Expressed in brain, lung, kidney and small intestine with the highest level in small intestine (at protein level). Detected in neurons of the cerebrum, bronchial epithelium, endothelial cells, tubular cells of kidney and epithelial cells of small intestine (at protein level). Expression is increased in the kidney of diabetic wild-type mice (at protein level), but not in the other tissues. Expressed only in kidney. Expression is increased in the kidney of diabetic mice. Isoform 3: Expressed in lung, kidney and heart. The second most prevalent isoform with the highest level in lung. Not expressed in brain. Isoform 4: Expressed at very low level in lung only. Isoform 5: Expressed at very low level in lung only. Isoform 6: Expressed at very low level in lung only. Isoform 7: Expressed at very low level in heart only. Isoform 8: Expressed at very low level in lung only. Isoform 9: Expressed at very low level in heart only. Isoform 10: Expressed in lung, brain, heart and kidney with a very high level in kidney. Isoform 11: Expressed in brain, kidney and heart. Not expressed in lung. Isoform 12: Expressed at very low level in lung and kidney. Isoform 13: Expressed at very low level in lung only.

The protein resides in the cell membrane. It is found in the cell projection. The protein localises to the phagocytic cup. Its subcellular location is the early endosome. It localises to the nucleus. The protein resides in the secreted. Its function is as follows. Cell surface pattern recognition receptor that senses endogenous stress signals with a broad ligand repertoire including advanced glycation end products, S100 proteins, high-mobility group box 1 protein/HMGB1, amyloid beta/APP oligomers, nucleic acids, histones, phospholipids and glycosaminoglycans. Advanced glycosylation end products are nonenzymatically glycosylated proteins which accumulate in vascular tissue in aging and at an accelerated rate in diabetes. These ligands accumulate at inflammatory sites during the pathogenesis of various diseases including diabetes, vascular complications, neurodegenerative disorders and cancers, and RAGE transduces their binding into pro-inflammatory responses. Upon ligand binding, uses TIRAP and MYD88 as adapters to transduce the signal ultimately leading to the induction of inflammatory cytokines IL6, IL8 and TNFalpha through activation of NF-kappa-B. Interaction with S100A12 on endothelium, mononuclear phagocytes, and lymphocytes triggers cellular activation, with generation of key pro-inflammatory mediators. Interaction with S100B after myocardial infarction may play a role in myocyte apoptosis by activating ERK1/2 and p53/TP53 signaling. Contributes to the translocation of amyloid-beta peptide (ABPP) across the cell membrane from the extracellular to the intracellular space in cortical neurons. ABPP-initiated RAGE signaling, especially stimulation of p38 mitogen-activated protein kinase (MAPK), has the capacity to drive a transport system delivering ABPP as a complex with RAGE to the intraneuronal space. Participates in endothelial albumin transcytosis together with HMGB1 through the RAGE/SRC/Caveolin-1 pathway, leading to endothelial hyperpermeability. Mediates the loading of HMGB1 in extracellular vesicles (EVs) that shuttle HMGB1 to hepatocytes by transferrin-mediated endocytosis and subsequently promote hepatocyte pyroptosis by activating the NLRP3 inflammasome. Binds to DNA and promotes extracellular hypomethylated DNA (CpG DNA) uptake by cells via the endosomal route to activate inflammatory responses. Mediates phagocytosis by non-professional phagocytes (NPP) and this is enhanced by binding to ligands including RNA, DNA, HMGB1 and histones. Promotes NPP-mediated phagocytosis of Saccharomyces cerevisiae spores by binding to RNA attached to the spore wall. Also promotes NPP-mediated phagocytosis of apoptotic cells. Following DNA damage, recruited to DNA double-strand break sites where it colocalizes with the MRN repair complex via interaction with double-strand break repair protein MRE11. Enhances the endonuclease activity of MRE11, promoting the end resection of damaged DNA. Promotes DNA damage repair in trophoblasts which enhances trophoblast invasion and contributes to placental development and maintenance. Protects cells from DNA replication stress by localizing to damaged replication forks where it stabilizes the MCM2-7 complex and promotes faithful progression of the replication fork. Is able to advanced glycosylation end product (AGE)-induce nuclear factor NF-kappa-B activation. In terms of biological role, down-regulates receptor for advanced glycosylation end products (RAGE)-ligand induced signaling through various MAPK pathways including ERK1/2, p38 and SAPK/JNK. Significantly affects tumor cell properties through decreasing cell migration, invasion, adhesion and proliferation, and increasing cellular apoptosis. Exhibits drastic inhibition on tumorigenesis in vitro. This Mus musculus (Mouse) protein is Advanced glycosylation end product-specific receptor (Ager).